A 79-amino-acid chain; its full sequence is Small ribosomal subunit protein uS17 (79 aa).

Belongs to the universal ribosomal protein uS17 family. As to quaternary structure, part of the 30S ribosomal subunit.

Its function is as follows. One of the primary rRNA binding proteins, it binds specifically to the 5'-end of 16S ribosomal RNA. The polypeptide is Small ribosomal subunit protein uS17 (Rhizobium johnstonii (strain DSM 114642 / LMG 32736 / 3841) (Rhizobium leguminosarum bv. viciae)).